The sequence spans 137 residues: Large ribosomal subunit protein uL16 (137 aa).

It belongs to the universal ribosomal protein uL16 family. Part of the 50S ribosomal subunit.

Functionally, binds 23S rRNA and is also seen to make contacts with the A and possibly P site tRNAs. The chain is Large ribosomal subunit protein uL16 from Nitratidesulfovibrio vulgaris (strain ATCC 29579 / DSM 644 / CCUG 34227 / NCIMB 8303 / VKM B-1760 / Hildenborough) (Desulfovibrio vulgaris).